Reading from the N-terminus, the 204-residue chain is Guanylate kinase (204 aa).

The Guanylate kinase-like domain maps to 5–184 (GLLIVLSGPS…ACDKIKAIVL (180 aa)). ATP is bound at residue 12-19 (GPSGVGKG).

Belongs to the guanylate kinase family.

The protein localises to the cytoplasm. It carries out the reaction GMP + ATP = GDP + ADP. Functionally, essential for recycling GMP and indirectly, cGMP. The polypeptide is Guanylate kinase (gmk) (Bacillus subtilis (strain 168)).